The following is a 188-amino-acid chain: MARLIWLTGASGSGKDTLLDALRQTEPVRLLVAHRYITRPAQAGGENHIALSEAEFAYRREHNLFALHWQAHQYQYGIGIEVDHWLSAGLDVVVNGSRSHHQQAQQRYGSRLLPVCLQVSAAVLAQRLRQRGREDEAQIALRLQRADAMDILPATCRRLNNDGPLAQTLQAFHTLLAAEKSDFWQISL.

This sequence belongs to the ribose 1,5-bisphosphokinase family.

The catalysed reaction is alpha-D-ribose 1,5-bisphosphate + ATP = 5-phospho-alpha-D-ribose 1-diphosphate + ADP. Its pathway is metabolic intermediate biosynthesis; 5-phospho-alpha-D-ribose 1-diphosphate biosynthesis; 5-phospho-alpha-D-ribose 1-diphosphate from D-ribose 5-phosphate (route II): step 3/3. Catalyzes the phosphorylation of ribose 1,5-bisphosphate to 5-phospho-D-ribosyl alpha-1-diphosphate (PRPP). In Dickeya zeae (strain Ech586) (Dickeya dadantii (strain Ech586)), this protein is Ribose 1,5-bisphosphate phosphokinase PhnN.